A 652-amino-acid polypeptide reads, in one-letter code: Complement component C1q receptor (652 aa).

Residues 1–21 (MATSMGLLLLLLLLLTQPGAG) form the signal peptide. Residues 24–580 (ADTEAVVCVG…QNNDGTDGQK (557 aa)) are Extracellular-facing. In terms of domain architecture, C-type lectin spans 32–174 (VGTACYTAHS…CGSPGSPGSN (143 aa)). 16 disulfide bridges follow: cysteine 141-cysteine 165, cysteine 264-cysteine 275, cysteine 271-cysteine 285, cysteine 287-cysteine 300, cysteine 306-cysteine 317, cysteine 311-cysteine 328, cysteine 330-cysteine 343, cysteine 349-cysteine 358, cysteine 354-cysteine 367, cysteine 369-cysteine 383, cysteine 389-cysteine 400, cysteine 396-cysteine 409, cysteine 411-cysteine 425, cysteine 431-cysteine 443, cysteine 439-cysteine 452, and cysteine 454-cysteine 467. EGF-like domains are found at residues 260–301 (PKYG…VTCA) and 302–344 (SRNP…LDCV). An N-linked (GlcNAc...) asparagine glycan is attached at asparagine 325. Residues 345 to 384 (DVDECQDSPCAQECVNTPGGFRCECWVGYEPGGPGEGACQ) enclose the EGF-like 3; calcium-binding domain. The region spanning 385-426 (DVDECALGRSPCAQGCTNTDGSFHCSCEEGYVLAGEDGTQCQ) is the EGF-like 4; calcium-binding domain. In terms of domain architecture, EGF-like 5; calcium-binding spans 427–468 (DVDECVGPGGPLCDSLCFNTQGSFHCGCLPGWVLAPNGVSCT). Disordered stretches follow at residues 472–546 (VSLG…VWRE) and 553–572 (TAASGPQEPAGGDSSVATQN). Residues 512 to 526 (ATPTTSRPSLSSDAP) are compositionally biased toward polar residues. The helical transmembrane segment at 581 to 601 (LLLFYILGTVVAILLLLALAL) threads the bilayer. Over 602 to 652 (GLLVYRKRRAKREEKKEKKPQNAADSYSWVPERAESRAMENQYSPTPGTDC) the chain is Cytoplasmic. The segment at 611–652 (AKREEKKEKKPQNAADSYSWVPERAESRAMENQYSPTPGTDC) is disordered. Basic and acidic residues predominate over residues 612 to 621 (KREEKKEKKP). Serine 627 bears the Phosphoserine mark. Tyrosine 628 and tyrosine 644 each carry phosphotyrosine. The segment covering 640–652 (MENQYSPTPGTDC) has biased composition (polar residues).

In terms of assembly, homodimer. Interacts with C1QBP; the association may represent a cell surface C1q receptor. Interacts with surfactant protein A/SFTPA1. Interacts with multimerin-2/MMRN2. Interacts with DAG1; this interaction plays an important role in endothelial cell migration. Interacts with CBL. Interacts with IGFBP7. Interacts with VEGFR2. As to quaternary structure, (Microbial infection) Interacts with hepatitis virus C/HCV core protein. Post-translationally, N- and O-glycosylated. Phosphorylated on Tyr-628 and Tyr-644 by SRC; these phosphorylations promote endothelial cell adhesion and migration. As to expression, highly expressed in endothelial cells, platelets, cells of myeloid origin, such as monocytes and neutrophils. Not expressed in cells of lymphoid origin.

The protein localises to the cell membrane. In terms of biological role, cell surface receptor that plays a role in various physiological processes including inflammation, phagocytosis, and cell adhesion. Plays a role in phagocytosis and enhances the uptake of apoptotic cells and immune complexes by acting as a receptor for defense collagens including surfactant protein A/SFTPA1, C1q, and mannose-binding lectin (MBL2). Plays a role in the regulation of endothelial cell function and adhesion by activating angiogenesis. Mechanistically, exerts its angiogenic function by associating with beta-dystroglycan, leading to SRC-dependent phosphorylation and subsequent recruitment of CBL. In turn, CBL provides a docking site for downstream signaling components, such as CRKL to enhance cell migration. Participates in angiogenesis also by acting as a receptor for the ECM pan-endothelial glycoprotein multimerin-2/MMRN2 and IGFBP7 ligands. Both ligands play a non-redundant role in CD93-mediated endothelial cell function. Acts as a key regulator of endothelial barrier function through modulating VEGFR2 function. This chain is Complement component C1q receptor (CD93), found in Homo sapiens (Human).